Consider the following 807-residue polypeptide: Phenylalanine--tRNA ligase beta subunit (807 aa).

The tRNA-binding domain maps to 39–153; it reads SARSQGVVVG…EIPAVGTPVA (115 aa). A B5 domain is found at 407 to 491; sequence RTPVPLQLRR…RLVGFDKFGS (85 aa). The Mg(2+) site is built by Asp469, Asp475, Glu478, and Glu479. Positions 713–806 constitute an FDX-ACB domain; it reads PTVPASERDL…LSKQFKAELR (94 aa).

The protein belongs to the phenylalanyl-tRNA synthetase beta subunit family. Type 1 subfamily. In terms of assembly, tetramer of two alpha and two beta subunits. Mg(2+) serves as cofactor.

It is found in the cytoplasm. The enzyme catalyses tRNA(Phe) + L-phenylalanine + ATP = L-phenylalanyl-tRNA(Phe) + AMP + diphosphate + H(+). The sequence is that of Phenylalanine--tRNA ligase beta subunit from Synechococcus sp. (strain CC9902).